The following is a 272-amino-acid chain: Protein FAM210A (272 aa).

In terms of domain architecture, DUF1279 spans 117–229; the sequence is DKSISLYQRF…GYMSTPPPVK (113 aa). Residues 136 to 156 traverse the membrane as a helical segment; the sequence is VLIPVHLITSGVWFGTFYYAA. The stretch at 229–271 forms a coiled coil; that stretch reads KEYLQDRMEETKELITEKMEETKDRLTEKLQETKEKVSFKKKV. The interval 246–272 is disordered; it reads KMEETKDRLTEKLQETKEKVSFKKKVE.

The protein belongs to the FAM210 family. In terms of assembly, interacts with ATAD3A.

Its subcellular location is the membrane. It localises to the mitochondrion. The protein resides in the cytoplasm. Functionally, may play a role in the structure and strength of both muscle and bone. This chain is Protein FAM210A (FAM210A), found in Pongo abelii (Sumatran orangutan).